The sequence spans 298 residues: Small ribosomal subunit protein uS3m (298 aa).

Belongs to the universal ribosomal protein uS3 family.

It localises to the mitochondrion. The sequence is that of Small ribosomal subunit protein uS3m (RPS3) from Acanthamoeba castellanii (Amoeba).